The chain runs to 558 residues: uncharacterized protein (558 aa).

Residues Asn531 to Arg558 form a disordered region.

This is an uncharacterized protein from Saccharomyces cerevisiae (strain ATCC 204508 / S288c) (Baker's yeast).